Here is a 36-residue protein sequence, read N- to C-terminus: Photosystem I reaction center subunit VIII (36 aa).

The helical transmembrane segment at 9-29 threads the bilayer; sequence ILVPLVGLIFPALSMALLFIY.

The protein belongs to the PsaI family.

It is found in the plastid. The protein resides in the chloroplast thylakoid membrane. In terms of biological role, may help in the organization of the PsaL subunit. This chain is Photosystem I reaction center subunit VIII, found in Pyropia yezoensis (Susabi-nori).